Consider the following 549-residue polypeptide: Efflux pump patC (549 aa).

The span at 1–12 (MAESTAHTSPSL) shows a compositional bias: polar residues. A disordered region spans residues 1–40 (MAESTAHTSPSLNDKEREVDQGILSDESGPAEEVKETPDQ). Transmembrane regions (helical) follow at residues 50–70 (LLIC…NTIV), 85–105 (AQLG…ILPL), 116–136 (WLFI…GGAP), 146–166 (VWAG…ITIL), 178–198 (LVGL…GAFA), 206–226 (WGFY…VFLL), 252–272 (VLSA…GVMW), 282–302 (LYVV…FCVL), 321–341 (IALY…VYYI), 360–380 (LLPF…LMPK), 385–405 (VLWY…MYTV), 419–439 (ILLG…PSLV), 460–482 (LLGL…NALL), and 526–546 (VYVM…FLPW).

It belongs to the major facilitator superfamily. TCR/Tet family.

The protein resides in the vacuole membrane. It localises to the cell membrane. Efflux pump; part of the gene cluster that mediates the biosynthesis of patulin, an acetate-derived tetraketide mycotoxin produced by several fungal species that shows antimicrobial properties against several bacteria. May be involved in the secretion of E-ascladiol to be converted to patulin by the secreted patulin synthase patE. This is Efflux pump patC from Aspergillus clavatus (strain ATCC 1007 / CBS 513.65 / DSM 816 / NCTC 3887 / NRRL 1 / QM 1276 / 107).